A 603-amino-acid chain; its full sequence is MAFNFNWSPLIADTSRARDMLTTALNKSPKPPIIVDDIIVTELNLGTTPPELEILEIGDLAEDRFRGIFKMSYAGDAFLTLKTKVQANPLKTYLSNKPDFASPQPLAAAAGLTIPLQITLSNIRLSGFVILVFSKQKGLTLVFRNDPLESLKVSSTFDSIPFVRDYLQKEIEGQLRVLFMEDLPAIIHRLSLRMLSPEYQEIETEERLEGANDTTAAIDPLASPPEDAVDAFGNPLDEAQISAMSLDSGEIHASFSQKNILRLAALSESQRTLSLFTPGIREAVFRAWAGHPDRAESGAATPALTQGSLSRIQSTFGSLKSGASSVASGSTGNETLSSRPTLASSYSTSAGISLGSGRSRAGGMRKRKKRVVDLRRKDGADSGVSTEANTPLPSTQVSDTSSVIPEEREAEEELATPPTSPPQPGRRFESRRGSLDVGTPKRIPEEPPTFGPLLAPAPLIPNASKAAKSKRTVSPPAHLEDPFVSHTSSRRPPISRNKLRQAQQSTSPLLRSLSFDKVSSLSALCSPPRISSPPNADLMSSSGGILEQAWMQKMAQEIARKVQEEKDKSSGQRRPSHSRTKTAPTGGFWQGEDEVEAPPAYVA.

Residues 1-205 (MAFNFNWSPL…SPEYQEIETE (205 aa)) enclose the SMP-LTD domain. The span at 320–332 (KSGASSVASGSTG) shows a compositional bias: low complexity. Disordered regions lie at residues 320–511 (KSGA…PLLR) and 558–603 (IARK…AYVA). Polar residues predominate over residues 333–351 (NETLSSRPTLASSYSTSAG). A compositionally biased stretch (basic and acidic residues) spans 371–380 (VVDLRRKDGA). Polar residues predominate over residues 383-403 (GVSTEANTPLPSTQVSDTSSV). A compositionally biased stretch (low complexity) spans 452 to 463 (PLLAPAPLIPNA). Over residues 500–509 (RQAQQSTSPL) the composition is skewed to polar residues. A compositionally biased stretch (basic and acidic residues) spans 558 to 570 (IARKVQEEKDKSS).

The protein belongs to the MDM34 family. As to quaternary structure, component of the ER-mitochondria encounter structure (ERMES) or MDM complex, composed of mmm1, mdm10, mdm12 and mdm34.

Its subcellular location is the mitochondrion outer membrane. In terms of biological role, component of the ERMES/MDM complex, which serves as a molecular tether to connect the endoplasmic reticulum (ER) and mitochondria. Components of this complex are involved in the control of mitochondrial shape and protein biogenesis, and function in nonvesicular lipid trafficking between the ER and mitochondria. Mdm34 is required for the interaction of the ER-resident membrane protein mmm1 and the outer mitochondrial membrane-resident beta-barrel protein mdm10. The sequence is that of Mitochondrial distribution and morphology protein 34 from Pyrenophora tritici-repentis (strain Pt-1C-BFP) (Wheat tan spot fungus).